The following is a 320-amino-acid chain: 4-diphosphocytidyl-2-C-methyl-D-erythritol kinase (320 aa).

Lys26 is a catalytic residue. 111-121 (PVAGGMAGGSA) lines the ATP pocket. Asp153 is a catalytic residue.

The protein belongs to the GHMP kinase family. IspE subfamily.

The catalysed reaction is 4-CDP-2-C-methyl-D-erythritol + ATP = 4-CDP-2-C-methyl-D-erythritol 2-phosphate + ADP + H(+). It participates in isoprenoid biosynthesis; isopentenyl diphosphate biosynthesis via DXP pathway; isopentenyl diphosphate from 1-deoxy-D-xylulose 5-phosphate: step 3/6. In terms of biological role, catalyzes the phosphorylation of the position 2 hydroxy group of 4-diphosphocytidyl-2C-methyl-D-erythritol. This Mycobacterium marinum (strain ATCC BAA-535 / M) protein is 4-diphosphocytidyl-2-C-methyl-D-erythritol kinase.